A 1104-amino-acid chain; its full sequence is Carbamoyl phosphate synthase large chain (1104 aa).

The segment at 1 to 402 (MPRRTDLKSV…ALQKALRSTE (402 aa)) is carboxyphosphate synthetic domain. R129, R169, G175, G176, E208, I210, E215, G241, V242, H243, Q285, and E299 together coordinate ATP. An ATP-grasp 1 domain is found at 133 to 328 (KGVVERCGAE…IAKIAARLAV (196 aa)). The Mg(2+) site is built by Q285, E299, and N301. Mn(2+) contacts are provided by Q285, E299, and N301. Residues 403–547 (KRGATFSWAG…YSSYDEEDET (145 aa)) are oligomerization domain. The interval 548–948 (RPREKAAIVI…AFGKSQTAAY (401 aa)) is carbamoyl phosphate synthetic domain. The 192-residue stretch at 676–867 (GQVLERAGLV…LAKAAARLMA (192 aa)) folds into the ATP-grasp 2 domain. Residues R712, R751, L753, E758, G783, I784, H785, S786, Q826, and E838 each contribute to the ATP site. 3 residues coordinate Mg(2+): Q826, E838, and N840. 3 residues coordinate Mn(2+): Q826, E838, and N840. Residues 949–1099 (GGLPTAGTAF…QEHTARLNAA (151 aa)) enclose the MGS-like domain. Residues 949–1104 (GGLPTAGTAF…RLNAAWEGRA (156 aa)) form an allosteric domain region.

It belongs to the CarB family. Composed of two chains; the small (or glutamine) chain promotes the hydrolysis of glutamine to ammonia, which is used by the large (or ammonia) chain to synthesize carbamoyl phosphate. Tetramer of heterodimers (alpha,beta)4. Requires Mg(2+) as cofactor. The cofactor is Mn(2+).

It catalyses the reaction hydrogencarbonate + L-glutamine + 2 ATP + H2O = carbamoyl phosphate + L-glutamate + 2 ADP + phosphate + 2 H(+). It carries out the reaction hydrogencarbonate + NH4(+) + 2 ATP = carbamoyl phosphate + 2 ADP + phosphate + 2 H(+). The protein operates within amino-acid biosynthesis; L-arginine biosynthesis; carbamoyl phosphate from bicarbonate: step 1/1. It participates in pyrimidine metabolism; UMP biosynthesis via de novo pathway; (S)-dihydroorotate from bicarbonate: step 1/3. Functionally, large subunit of the glutamine-dependent carbamoyl phosphate synthetase (CPSase). CPSase catalyzes the formation of carbamoyl phosphate from the ammonia moiety of glutamine, carbonate, and phosphate donated by ATP, constituting the first step of 2 biosynthetic pathways, one leading to arginine and/or urea and the other to pyrimidine nucleotides. The large subunit (synthetase) binds the substrates ammonia (free or transferred from glutamine from the small subunit), hydrogencarbonate and ATP and carries out an ATP-coupled ligase reaction, activating hydrogencarbonate by forming carboxy phosphate which reacts with ammonia to form carbamoyl phosphate. This Kineococcus radiotolerans (strain ATCC BAA-149 / DSM 14245 / SRS30216) protein is Carbamoyl phosphate synthase large chain.